The primary structure comprises 183 residues: Small ribosomal subunit protein uS4 (183 aa).

The region spanning 106 to 168 (RRLETLVYKK…ETSPFTDENH (63 aa)) is the S4 RNA-binding domain. A disordered region spans residues 158–183 (NETSPFTDENHPLRMEMSGTKEEENE). Residues 165–183 (DENHPLRMEMSGTKEEENE) show a composition bias toward basic and acidic residues.

This sequence belongs to the universal ribosomal protein uS4 family. In terms of assembly, part of the 30S ribosomal subunit. Contacts protein S5. The interaction surface between S4 and S5 is involved in control of translational fidelity.

In terms of biological role, one of the primary rRNA binding proteins, it binds directly to 16S rRNA where it nucleates assembly of the body of the 30S subunit. Its function is as follows. With S5 and S12 plays an important role in translational accuracy. In Picrophilus torridus (strain ATCC 700027 / DSM 9790 / JCM 10055 / NBRC 100828 / KAW 2/3), this protein is Small ribosomal subunit protein uS4.